Reading from the N-terminus, the 216-residue chain is GTP cyclohydrolase 1 (216 aa).

3 residues coordinate Zn(2+): Cys-108, His-111, and Cys-179.

Belongs to the GTP cyclohydrolase I family. In terms of assembly, toroid-shaped homodecamer, composed of two pentamers of five dimers.

The enzyme catalyses GTP + H2O = 7,8-dihydroneopterin 3'-triphosphate + formate + H(+). Its pathway is cofactor biosynthesis; 7,8-dihydroneopterin triphosphate biosynthesis; 7,8-dihydroneopterin triphosphate from GTP: step 1/1. The sequence is that of GTP cyclohydrolase 1 from Shewanella sp. (strain MR-7).